The following is a 526-amino-acid chain: Probable fucosyltransferase 7 (526 aa).

At 1–4 (MKTK) the chain is on the cytoplasmic side. The chain crosses the membrane as a helical; Signal-anchor for type II membrane protein span at residues 5–25 (LMITIFSCLLLWSMLLLLSFS). Residues 26–526 (NIFKHQLLGA…KLVDDTKNEL (501 aa)) are Lumenal-facing. Residues Asn211, Asn215, and Asn363 are each glycosylated (N-linked (GlcNAc...) asparagine).

It belongs to the glycosyltransferase 37 family. As to expression, expressed in roots, leaves, stems and seedlings.

It localises to the golgi apparatus. The protein resides in the golgi stack membrane. Its pathway is protein modification; protein glycosylation. Functionally, may be involved in cell wall biosynthesis. May act as a fucosyltransferase. The sequence is that of Probable fucosyltransferase 7 (FUT7) from Arabidopsis thaliana (Mouse-ear cress).